We begin with the raw amino-acid sequence, 543 residues long: Methionine--tRNA ligase (543 aa).

Positions 13-23 (PYANGPLHVGH) match the 'HIGH' region motif. 4 residues coordinate Zn(2+): C145, C148, C158, and C161. The 'KMSKS' region signature appears at 334–338 (QFSKS). K337 is a binding site for ATP.

It belongs to the class-I aminoacyl-tRNA synthetase family. MetG type 1 subfamily. Zn(2+) serves as cofactor.

The protein resides in the cytoplasm. The catalysed reaction is tRNA(Met) + L-methionine + ATP = L-methionyl-tRNA(Met) + AMP + diphosphate. Is required not only for elongation of protein synthesis but also for the initiation of all mRNA translation through initiator tRNA(fMet) aminoacylation. This is Methionine--tRNA ligase from Thermoplasma volcanium (strain ATCC 51530 / DSM 4299 / JCM 9571 / NBRC 15438 / GSS1).